A 467-amino-acid polypeptide reads, in one-letter code: Dimethylamine methyltransferase MtbB3 (467 aa).

Residue Pyl-356 is a non-standard amino acid, pyrrolysine.

This sequence belongs to the dimethylamine methyltransferase family.

It carries out the reaction Co(I)-[dimethylamine-specific corrinoid protein] + dimethylamine + H(+) = methyl-Co(III)-[dimethylamine-specific corrinoid protein] + methylamine. It participates in one-carbon metabolism; methanogenesis from dimethylamine. Catalyzes the transfer of a methyl group from dimethylamine to the corrinoid cofactor of MtbC. This Methanosarcina mazei (strain ATCC BAA-159 / DSM 3647 / Goe1 / Go1 / JCM 11833 / OCM 88) (Methanosarcina frisia) protein is Dimethylamine methyltransferase MtbB3 (mtbB3).